The sequence spans 190 residues: Large ribosomal subunit protein bL9 (190 aa).

The protein belongs to the bacterial ribosomal protein bL9 family.

Its function is as follows. Binds to the 23S rRNA. This chain is Large ribosomal subunit protein bL9, found in Methylobacterium radiotolerans (strain ATCC 27329 / DSM 1819 / JCM 2831 / NBRC 15690 / NCIMB 10815 / 0-1).